The following is a 97-amino-acid chain: YcgL domain-containing protein PputGB1_4120 (97 aa).

Residues R3 to P87 form the YcgL domain.

In Pseudomonas putida (strain GB-1), this protein is YcgL domain-containing protein PputGB1_4120.